The following is a 405-amino-acid chain: Phosphoglycerate kinase (405 aa).

Substrate-binding positions include 24 to 26 (DFN), R40, 63 to 66 (HLGR), R122, and R162. Residues K213, E332, and 361 to 364 (GGDS) each bind ATP.

It belongs to the phosphoglycerate kinase family. In terms of assembly, monomer.

Its subcellular location is the cytoplasm. The catalysed reaction is (2R)-3-phosphoglycerate + ATP = (2R)-3-phospho-glyceroyl phosphate + ADP. The protein operates within carbohydrate degradation; glycolysis; pyruvate from D-glyceraldehyde 3-phosphate: step 2/5. The protein is Phosphoglycerate kinase of Corynebacterium diphtheriae (strain ATCC 700971 / NCTC 13129 / Biotype gravis).